We begin with the raw amino-acid sequence, 556 residues long: U3 small nucleolar RNA-associated protein 18 homolog (556 aa).

Basic residues predominate over residues M1–G24. The tract at residues M1–R70 is disordered. Low complexity predominate over residues A43–A65. K84 is covalently cross-linked (Glycyl lysine isopeptide (Lys-Gly) (interchain with G-Cter in SUMO2)). Residues R111–V143 are disordered. Phosphoserine is present on residues S121 and S124. Glycyl lysine isopeptide (Lys-Gly) (interchain with G-Cter in SUMO2) cross-links involve residues K183 and K201. The segment at V193–Q219 is disordered. The residue at position 204 (T204) is a Phosphothreonine. 3 positions are modified to phosphoserine: S205, S206, and S210. Positions D207–D216 are enriched in acidic residues. Phosphothreonine is present on T221. WD repeat units follow at residues P249–I288, L293–V333, L339–K380, I381–R419, V421–N462, and N471–N512. Residue K517 forms a Glycyl lysine isopeptide (Lys-Gly) (interchain with G-Cter in SUMO2) linkage.

Belongs to the WD repeat UTP18 family. Part of the small subunit (SSU) processome, composed of more than 70 proteins and the RNA chaperone small nucleolar RNA (snoRNA) U3.

The protein resides in the nucleus. It localises to the nucleolus. Its function is as follows. Part of the small subunit (SSU) processome, first precursor of the small eukaryotic ribosomal subunit. During the assembly of the SSU processome in the nucleolus, many ribosome biogenesis factors, an RNA chaperone and ribosomal proteins associate with the nascent pre-rRNA and work in concert to generate RNA folding, modifications, rearrangements and cleavage as well as targeted degradation of pre-ribosomal RNA by the RNA exosome. Involved in nucleolar processing of pre-18S ribosomal RNA. This is U3 small nucleolar RNA-associated protein 18 homolog from Homo sapiens (Human).